We begin with the raw amino-acid sequence, 362 residues long: Protein BIG GRAIN 1-like D (362 aa).

Disordered stretches follow at residues 22-113 (IDPK…TLFH), 132-168 (KFNRHDENWENTRNRRSVKSSGNQKKPKTPASPGGRI), and 303-327 (VKTNGFEDYEDDDEDDDDDDVASDS). The span at 23–47 (DPKTQKTQPYVGSVNTTTKKQSIVT) shows a compositional bias: polar residues. Over residues 50 to 60 (VPDRKIHRDRF) the composition is skewed to basic and acidic residues. Residues 63-78 (SVSSSSDSNSSIFSSS) are compositionally biased toward low complexity. Residues 132 to 144 (KFNRHDENWENTR) are compositionally biased toward basic and acidic residues. Acidic residues predominate over residues 309 to 324 (EDYEDDDEDDDDDDVA).

This sequence belongs to the BIG GRAIN 1 (BG1) plant protein family.

The protein resides in the cell membrane. In terms of biological role, involved in auxin transport. Regulator of the auxin signaling pathway. The sequence is that of Protein BIG GRAIN 1-like D from Arabidopsis thaliana (Mouse-ear cress).